We begin with the raw amino-acid sequence, 291 residues long: MRWPPWASESQAQQHNTKPPIEHNEKEHGSKSKSWESSVTAIDWAAFAEPRTIIPTVILTSGFLGAFHIHRRYLRRFPDAGSITPSHFRRRSLLGRVTSVGDGDNFRLYHTPGGRLAGWGWLPWKKVPTSKKELRDKTVHIRLAGVDAPELAHFGRPEQPFAREAHQWLTSYLLNRRVRAYIHRPDQYQRAVATVYVRRALDFPIPFRRRDVSYEMLKQGLATVYEAKWGAEFGGEAMERKYRKAEWWAKLRGTGLWKDFRRNEKEWESPRAYKTRMGLEEAVQPRVESKK.

The segment at 1–34 (MRWPPWASESQAQQHNTKPPIEHNEKEHGSKSKS) is disordered. Polar residues predominate over residues 8–17 (SESQAQQHNT). The span at 20 to 34 (PIEHNEKEHGSKSKS) shows a compositional bias: basic and acidic residues. The chain crosses the membrane as a helical span at residues 53 to 69 (IIPTVILTSGFLGAFHI). The TNase-like domain occupies 91 to 259 (RSLLGRVTSV…KLRGTGLWKD (169 aa)). The active site involves arginine 142. Ca(2+) is bound at residue aspartate 147. Active-site residues include glutamate 150 and arginine 190.

It belongs to the LCL3 family.

It is found in the mitochondrion. Its subcellular location is the membrane. This chain is Probable endonuclease lcl3 (lcl3), found in Aspergillus clavatus (strain ATCC 1007 / CBS 513.65 / DSM 816 / NCTC 3887 / NRRL 1 / QM 1276 / 107).